A 117-amino-acid polypeptide reads, in one-letter code: MIGPLGVSGFKTSLDIDTTEAADTAKGSMSLVGLSSIDATSPSAALVCPSGSVVLVSLKESGCATFIFLCEGSSLFIMSSGCFLIASLSCVGLTVFETLFSLVFDTAYFICGMVIQL.

Residues 76 to 96 (FIMSSGCFLIASLSCVGLTVF) form a helical membrane-spanning segment.

It localises to the membrane. This is an uncharacterized protein from Saccharomyces cerevisiae (strain ATCC 204508 / S288c) (Baker's yeast).